A 796-amino-acid chain; its full sequence is DnaJ homolog subfamily C member 10 (796 aa).

The N-terminal stretch at 1–33 (MKHSLNTATSSSSVLKRTILYLVLISLAALVYC) is a signal peptide. The region spanning 36–100 (DYYDLLGVSK…DLRKKYDKYG (65 aa)) is the J domain. The Thioredoxin 1 domain occupies 131-233 (EIITLDRGEF…ERLVNFAMPY (103 aa)). A disulfide bridge connects residues Cys159 and Cys162. 2 trxb regions span residues 236–351 (STVT…LPDL) and 349–464 (PDLE…PTNF). Thioredoxin domains lie at 455–554 (HVIT…IEDL), 558–668 (SVVT…ALMY), and 672–780 (ASFD…ITKR). Cys481 and Cys484 form a disulfide bridge. N-linked (GlcNAc...) asparagine glycosylation is present at Asn531. 2 disulfide bridges follow: Cys589–Cys592 and Cys701–Cys704. Asn753 carries an N-linked (GlcNAc...) asparagine glycan. The short motif at 793-796 (KDEL) is the Prevents secretion from ER element.

It localises to the endoplasmic reticulum lumen. Its function is as follows. Endoplasmic reticulum disulfide reductase involved both in the correct folding of proteins and degradation of misfolded proteins. Required for efficient folding of proteins in the endoplasmic reticulum by catalyzing the removal of non-native disulfide bonds formed during the folding of proteins. Also involved in endoplasmic reticulum-associated degradation (ERAD) by reducing incorrect disulfide bonds in misfolded glycoproteins. This chain is DnaJ homolog subfamily C member 10 (dnajc10), found in Xenopus laevis (African clawed frog).